A 435-amino-acid chain; its full sequence is Transmembrane protease serine 4 (435 aa).

Topologically, residues 1–30 (MESDSGQPLNNRDIVPFRKPRRPQETFKKV) are cytoplasmic. A helical; Signal-anchor for type II membrane protein membrane pass occupies residues 31–51 (GIPIIAVLLSLIALVIVALLI). Residues 52-435 (KVILDKYYFI…WIYNVRKSEM (384 aa)) lie on the Extracellular side of the membrane. The region spanning 59 to 101 (YFICGSPLTFIQRGQLCDGHLDCASGEDEEHCVKDFPEKPGVA) is the LDL-receptor class A domain. Disulfide bonds link cysteine 62/cysteine 81, cysteine 75/cysteine 90, cysteine 125/cysteine 181, cysteine 138/cysteine 191, cysteine 194/cysteine 308, cysteine 228/cysteine 244, cysteine 354/cysteine 370, and cysteine 381/cysteine 408. The region spanning 102–202 (VRLSKDRSTL…DCGKSLKTPR (101 aa)) is the SRCR domain. N-linked (GlcNAc...) asparagine glycosylation is found at asparagine 128 and asparagine 176. The region spanning 203-432 (VVGGVEAPVD…YLNWIYNVRK (230 aa)) is the Peptidase S1 domain. Residues histidine 243 and aspartate 288 each act as charge relay system in the active site. Serine 385 serves as the catalytic Charge relay system.

It belongs to the peptidase S1 family. Proteolytically processed; probably by an autocatalytic mechanism.

The protein localises to the cell membrane. It is found in the secreted. Functionally, plasma membrane-anchored serine protease that directly induces processing of pro-uPA/PLAU into the active form through proteolytic activity. Seems to be capable of activating ENaC. The polypeptide is Transmembrane protease serine 4 (Mus musculus (Mouse)).